Reading from the N-terminus, the 178-residue chain is Large ribosomal subunit protein uL5 (178 aa).

Ala2 is modified (N-acetylalanine). Lys38 is covalently cross-linked (Glycyl lysine isopeptide (Lys-Gly) (interchain with G-Cter in SUMO2)). Phosphothreonine is present on residues Thr44 and Thr47. An N6-acetyllysine; alternate modification is found at Lys52. A Glycyl lysine isopeptide (Lys-Gly) (interchain with G-Cter in SUMO2); alternate cross-link involves residue Lys52. N6-acetyllysine is present on Lys85. Residue Lys154 forms a Glycyl lysine isopeptide (Lys-Gly) (interchain with G-Cter in SUMO2) linkage.

This sequence belongs to the universal ribosomal protein uL5 family. In terms of assembly, component of the large ribosomal subunit (LSU). Part of the 5S RNP complex, which is a LSU subcomplex composed of the 5S RNA, RPL5 and RPL11. Component of a hexameric 5S RNP precursor complex, composed of 5S RNA, RRS1, RPF2/BXDC1, RPL5, RPL11 and HEATR3; this complex acts as a precursor for ribosome assembly. Interacts with PML. Interacts with MDM2 (via its RanBP2-type zinc finger domain); negatively regulates MDM2-mediated TP53 ubiquitination and degradation. Interacts with NOP53; retains RPL11 into the nucleolus.

It localises to the nucleus. The protein resides in the nucleolus. Its subcellular location is the cytoplasm. Its function is as follows. Component of the ribosome, a large ribonucleoprotein complex responsible for the synthesis of proteins in the cell. The small ribosomal subunit (SSU) binds messenger RNAs (mRNAs) and translates the encoded message by selecting cognate aminoacyl-transfer RNA (tRNA) molecules. The large subunit (LSU) contains the ribosomal catalytic site termed the peptidyl transferase center (PTC), which catalyzes the formation of peptide bonds, thereby polymerizing the amino acids delivered by tRNAs into a polypeptide chain. The nascent polypeptides leave the ribosome through a tunnel in the LSU and interact with protein factors that function in enzymatic processing, targeting, and the membrane insertion of nascent chains at the exit of the ribosomal tunnel. As part of the 5S RNP/5S ribonucleoprotein particle it is an essential component of the LSU, required for its formation and the maturation of rRNAs. It also couples ribosome biogenesis to p53/TP53 activation. As part of the 5S RNP it accumulates in the nucleoplasm and inhibits MDM2, when ribosome biogenesis is perturbed, mediating the stabilization and the activation of TP53. Promotes nucleolar location of PML. The polypeptide is Large ribosomal subunit protein uL5 (RPL11) (Oryctolagus cuniculus (Rabbit)).